The chain runs to 299 residues: Probable tyrosine phosphatase protein J4 (299 aa).

One can recognise a Tyrosine-protein phosphatase domain in the interval 16 to 289 (VEALDFLSFM…VYCYQALYVW (274 aa)). Cys230 (phosphocysteine intermediate) is an active-site residue.

This sequence belongs to the protein-tyrosine phosphatase family.

The enzyme catalyses O-phospho-L-tyrosyl-[protein] + H2O = L-tyrosyl-[protein] + phosphate. The protein is Probable tyrosine phosphatase protein J4 (J5) of Microplitis demolitor bracovirus (isolate Webb) (MdBV).